The sequence spans 932 residues: MAARGGAERAAGAGDGRRGQRRHLRPGRVLAALRGPAAPGAGGARAALAAALLWATWALLLAAPAAGRPATTPPAPPPEEAASPAPPASPSPPGPDGDDAASPDNSTDVRAALRLAQAAGENSRFFVCPPPSGATVVRLAPARPCPEYGLGRNYTEGIGVIYKENIAPYTFKAYIYKNVIVTTTWAGSTYAAITNQYTDRVPVGMGEITDLVDKKWRCLSKAEYLRSGRKVVAFDRDDDPWEAPLKPARLSAPGVRGWHTTDDVYTALGSAGLYRTGTSVNCIVEEVEARSVYPYDSFALSTGDIIYMSPFYGLREGAHREHTSYSPERFQQIEGYYKRDMATGRRLKEPVSRNFLRTQHVTVAWDWVPKRKNVCSLAKWREADEMLRDESRGNFRFTARSLSATFVSDSHTFALQNVPLSDCVIEEAEAAVERVYRERYNGTHVLSGSLETYLARGGFVVAFRPMLSNELAKLYLQELARSNGTLEGLFAAAAPKPGPRRARRAAPSAPGGPGAANGPAGDGDAGGRVTTVSSAEFAALQFTYDHIQDHVNTMFSRLATSWCLLQNKERALWAEAAKLNPSAAASAALDRRAAARMLGDAMAVTYCHELGEGRVFIENSMRAPGGVCYSRPPVSFAFGNESEPVEGQLGEDNELLPGRELVEPCTANHKRYFRFGADYVYYENYAYVRRVPLAELEVISTFVDLNLTVLEDREFLPLEVYTRAELADTGLLDYSEIQRRNQLHELRFYDIDRVVKTDGNMAIMRGLANFFQGLGAVGQAVGTVVLGAAGAALSTVSGIASFIANPFGALATGLLVLAGLVAAFLAYRYISRLRSNPMKALYPITTRALKDDARGATAPGEEEEEFDAAKLEQAREMIKYMSLVSAVERQEHKAKKSNKGGPLLATRLTQLALRRRAPPEYQQLPMADVGGA.

A compositionally biased stretch (low complexity) spans 1 to 12 (MAARGGAERAAG). Disordered stretches follow at residues 1-25 (MAARGGAERAAGAGDGRRGQRRHLR) and 67-105 (GRPATTPPAPPPEEAASPAPPASPSPPGPDGDDAASPDN). An N-terminal signal peptide occupies residues 1 to 62 (MAARGGAERA…LWATWALLLA (62 aa)). At 63–806 (APAAGRPATT…SGIASFIANP (744 aa)) the chain is on the virion surface side. Pro residues predominate over residues 71 to 95 (TTPPAPPPEEAASPAPPASPSPPGP). Residues N105 and N153 are each glycosylated (N-linked (GlcNAc...) asparagine; by host). Cystine bridges form between C128/C607, C145/C563, C218/C282, C375/C423, and C628/C665. Involved in fusion and/or binding to host membrane regions lie at residues 184-190 (TWAGSTY) and 269-276 (GSAGLYRT). N-linked (GlcNAc...) asparagine; by host glycosylation is found at N441 and N483. The segment at 492 to 527 (AAAPKPGPRRARRAAPSAPGGPGAANGPAGDGDAGG) is disordered. Positions 511-526 (GGPGAANGPAGDGDAG) are enriched in gly residues. Residues N640 and N706 are each glycosylated (N-linked (GlcNAc...) asparagine; by host). 2 hydrophobic membrane proximal region regions span residues 751–804 (IDRV…SFIA) and 784–804 (VVLGAAGAALSTVSGIASFIA). The helical transmembrane segment at 807 to 827 (FGALATGLLVLAGLVAAFLAY) threads the bilayer. At 828-932 (RYISRLRSNP…QLPMADVGGA (105 aa)) the chain is on the intravirion side. Positions 880 to 883 (YMSL) match the Golgi targeting motif. Residues 921–924 (YQQL) carry the Internalization motif motif.

This sequence belongs to the herpesviridae glycoprotein B family. In terms of assembly, homotrimer; disulfide-linked. Binds to heparan sulfate proteoglycans. Interacts with gH/gL heterodimer. In terms of processing, a proteolytic cleavage by host furin generates two subunits that remain linked by disulfide bonds.

The protein resides in the virion membrane. Its subcellular location is the host cell membrane. The protein localises to the host endosome membrane. It is found in the host Golgi apparatus membrane. In terms of biological role, envelope glycoprotein that forms spikes at the surface of virion envelope. Essential for the initial attachment to heparan sulfate moieties of the host cell surface proteoglycans. Involved in fusion of viral and cellular membranes leading to virus entry into the host cell. Following initial binding to its host receptors, membrane fusion is mediated by the fusion machinery composed at least of gB and the heterodimer gH/gL. May be involved in the fusion between the virion envelope and the outer nuclear membrane during virion egress. In Bos taurus (Bovine), this protein is Envelope glycoprotein B.